The following is a 554-amino-acid chain: Folate synthesis bifunctional protein, mitochondrial (554 aa).

Residues 1–42 (MAPLLSQTLIHTGRFLLRRFLEPPPAVISAVAASRVCFHRYY) constitute a mitochondrion transit peptide. The tract at residues 90–215 (VIALGSNIGN…SFVLAPLVDL (126 aa)) is HPPK. Positions 273-541 (THVMGILNLT…NVRHNADAAK (269 aa)) constitute a Pterin-binding domain. The tract at residues 275-554 (VMGILNLTPD…AMLRRRRSKG (280 aa)) is DHPS. Residue asparagine 280 participates in Mg(2+) binding. (7,8-dihydropterin-6-yl)methyl diphosphate contacts are provided by residues threonine 320, aspartate 357, asparagine 376, aspartate 449, lysine 494, and 529–531 (RVH).

This sequence in the N-terminal section; belongs to the HPPK family. The protein in the C-terminal section; belongs to the DHPS family. Mg(2+) is required as a cofactor. Ubiquitous.

Its subcellular location is the mitochondrion. The enzyme catalyses 6-hydroxymethyl-7,8-dihydropterin + ATP = (7,8-dihydropterin-6-yl)methyl diphosphate + AMP + H(+). It carries out the reaction (7,8-dihydropterin-6-yl)methyl diphosphate + 4-aminobenzoate = 7,8-dihydropteroate + diphosphate. The protein operates within cofactor biosynthesis; tetrahydrofolate biosynthesis; 2-amino-4-hydroxy-6-hydroxymethyl-7,8-dihydropteridine diphosphate from 7,8-dihydroneopterin triphosphate: step 4/4. It functions in the pathway cofactor biosynthesis; tetrahydrofolate biosynthesis; 7,8-dihydrofolate from 2-amino-4-hydroxy-6-hydroxymethyl-7,8-dihydropteridine diphosphate and 4-aminobenzoate: step 1/2. Functionally, catalyzes the first two consecutive steps of tetrahydrofolate biosynthesis. This chain is Folate synthesis bifunctional protein, mitochondrial, found in Arabidopsis thaliana (Mouse-ear cress).